A 285-amino-acid chain; its full sequence is Bifunctional protein FolD (285 aa).

NADP(+) contacts are provided by residues 165-167 (GRS) and Ser190.

The protein belongs to the tetrahydrofolate dehydrogenase/cyclohydrolase family. In terms of assembly, homodimer.

It catalyses the reaction (6R)-5,10-methylene-5,6,7,8-tetrahydrofolate + NADP(+) = (6R)-5,10-methenyltetrahydrofolate + NADPH. The enzyme catalyses (6R)-5,10-methenyltetrahydrofolate + H2O = (6R)-10-formyltetrahydrofolate + H(+). The protein operates within one-carbon metabolism; tetrahydrofolate interconversion. Catalyzes the oxidation of 5,10-methylenetetrahydrofolate to 5,10-methenyltetrahydrofolate and then the hydrolysis of 5,10-methenyltetrahydrofolate to 10-formyltetrahydrofolate. The sequence is that of Bifunctional protein FolD from Ligilactobacillus salivarius (strain UCC118) (Lactobacillus salivarius).